We begin with the raw amino-acid sequence, 168 residues long: Ribosome maturation factor RimP (168 aa).

This sequence belongs to the RimP family.

It localises to the cytoplasm. In terms of biological role, required for maturation of 30S ribosomal subunits. The polypeptide is Ribosome maturation factor RimP (Bordetella bronchiseptica (strain ATCC BAA-588 / NCTC 13252 / RB50) (Alcaligenes bronchisepticus)).